Here is a 255-residue protein sequence, read N- to C-terminus: Hydroxyacylglutathione hydrolase (255 aa).

The Zn(2+) site is built by histidine 53, histidine 55, aspartate 57, histidine 58, histidine 110, aspartate 127, and histidine 165.

It belongs to the metallo-beta-lactamase superfamily. Glyoxalase II family. Monomer. The cofactor is Zn(2+).

It carries out the reaction an S-(2-hydroxyacyl)glutathione + H2O = a 2-hydroxy carboxylate + glutathione + H(+). Its pathway is secondary metabolite metabolism; methylglyoxal degradation; (R)-lactate from methylglyoxal: step 2/2. Thiolesterase that catalyzes the hydrolysis of S-D-lactoyl-glutathione to form glutathione and D-lactic acid. The sequence is that of Hydroxyacylglutathione hydrolase from Xanthomonas campestris pv. campestris (strain 8004).